The sequence spans 130 residues: Mediator of RNA polymerase II transcription subunit 31 (130 aa).

Belongs to the Mediator complex subunit 31 family. As to quaternary structure, component of the Mediator complex.

Its subcellular location is the nucleus. In terms of biological role, component of the Mediator complex, a coactivator involved in the regulated transcription of nearly all RNA polymerase II-dependent genes. Mediator functions as a bridge to convey information from gene-specific regulatory proteins to the basal RNA polymerase II transcription machinery. Mediator is recruited to promoters by direct interactions with regulatory proteins and serves as a scaffold for the assembly of a functional preinitiation complex with RNA polymerase II and the general transcription factors. This Candida glabrata (strain ATCC 2001 / BCRC 20586 / JCM 3761 / NBRC 0622 / NRRL Y-65 / CBS 138) (Yeast) protein is Mediator of RNA polymerase II transcription subunit 31 (SOH1).